Reading from the N-terminus, the 167-residue chain is Alanine- and arginine-rich domain-containing protein (167 aa).

Residues 140-167 (LKKRQDQELASKPQSPQDKEMNSECGSA) are disordered.

As to expression, preferentially expressed in testis both in embryo and adult. Expressed at much lower level in other tissues.

The protein is Alanine- and arginine-rich domain-containing protein (Aard) of Mus musculus (Mouse).